Consider the following 295-residue polypeptide: ATP-dependent (S)-NAD(P)H-hydrate dehydratase (295 aa).

The region spanning 9–289 (LLERARNLVP…DQIHQVFDDL (281 aa)) is the YjeF C-terminal domain. (6S)-NADPHX contacts are provided by residues Gly109 and 162–168 (NAIEFCR). Residues 193-197 (KGLND) and 214-223 (GSGRRCGGQG) contribute to the ATP site. Asp224 serves as a coordination point for (6S)-NADPHX.

The protein belongs to the NnrD/CARKD family. The cofactor is Mg(2+).

It carries out the reaction (6S)-NADHX + ATP = ADP + phosphate + NADH + H(+). The enzyme catalyses (6S)-NADPHX + ATP = ADP + phosphate + NADPH + H(+). In terms of biological role, catalyzes the dehydration of the S-form of NAD(P)HX at the expense of ATP, which is converted to ADP. Together with NAD(P)HX epimerase, which catalyzes the epimerization of the S- and R-forms, the enzyme allows the repair of both epimers of NAD(P)HX, a damaged form of NAD(P)H that is a result of enzymatic or heat-dependent hydration. The polypeptide is ATP-dependent (S)-NAD(P)H-hydrate dehydratase (Anopheles darlingi (Mosquito)).